Consider the following 393-residue polypeptide: MIGRRPQGLRAAASLKKQQQLEKQKQEASYELSGNSSPSKENGSENVDNGEMEDETMLVYTEEDNISQLWGLYEMSREKLENDDIDASVSLVFGTIHEADRILRNTEDISTLPKDFHAAYSSALLAVSELFEIAQKRLKETNTEESYIDAAIERAQLGLDAPGNESRLFLALARAYLEKVRVLVWRHDNEESLANIPVTQLVNPYIEKAIQYLRPLAQDSTEYFDALTPDSLRPLYILSSYLFQFGDQFSEAFLLDVCSIITALWLKSVVDPNTPAYYKLIAQEAVLNNYTTFAEYYMDLLDNSESNVDDLINKASSWLNNSVDTWNVIYTLDKSPERLLKLADIKMDLAQIVQDEASQDNYLKEACNAIKEAQGSGVELSPDYVEFVEAYSA.

Residues 1-51 are disordered; that stretch reads MIGRRPQGLRAAASLKKQQQLEKQKQEASYELSGNSSPSKENGSENVDNGE. Positions 19 to 28 are enriched in basic and acidic residues; the sequence is QQLEKQKQEA. A compositionally biased stretch (polar residues) spans 32–47; the sequence is LSGNSSPSKENGSENV.

It belongs to the ETT1 family. As to quaternary structure, interacts with ofd1.

The protein localises to the cytoplasm. The protein resides in the nucleus. Its function is as follows. Required for correct translation termination. Positive regulator of the stability of the N-terminal transcription factor domain (Sre1N) of sre1 which is released from the membrane and enters the nucleus to activate hypoxic gene expression. Also acts as a direct inhibitor of ofd1. Functions probably by inhibiting the ability of the ofd1 to accelerate Sre1N degradation in absence of oxygen. This Schizosaccharomyces pombe (strain 972 / ATCC 24843) (Fission yeast) protein is Negative regulator of ofd1 (nro1).